Consider the following 703-residue polypeptide: Polyribonucleotide nucleotidyltransferase (703 aa).

Aspartate 488 and aspartate 494 together coordinate Mg(2+). The KH domain occupies proline 555–isoleucine 614. The S1 motif domain occupies glycine 624 to lysine 692.

It belongs to the polyribonucleotide nucleotidyltransferase family. Mg(2+) serves as cofactor.

Its subcellular location is the cytoplasm. The catalysed reaction is RNA(n+1) + phosphate = RNA(n) + a ribonucleoside 5'-diphosphate. Functionally, involved in mRNA degradation. Catalyzes the phosphorolysis of single-stranded polyribonucleotides processively in the 3'- to 5'-direction. This Polaromonas naphthalenivorans (strain CJ2) protein is Polyribonucleotide nucleotidyltransferase.